A 394-amino-acid polypeptide reads, in one-letter code: Cobalt-precorrin-5B C(1)-methyltransferase (394 aa).

Belongs to the CbiD family.

It carries out the reaction Co-precorrin-5B + S-adenosyl-L-methionine = Co-precorrin-6A + S-adenosyl-L-homocysteine. It participates in cofactor biosynthesis; adenosylcobalamin biosynthesis; cob(II)yrinate a,c-diamide from sirohydrochlorin (anaerobic route): step 6/10. Catalyzes the methylation of C-1 in cobalt-precorrin-5B to form cobalt-precorrin-6A. In Clostridium beijerinckii (strain ATCC 51743 / NCIMB 8052) (Clostridium acetobutylicum), this protein is Cobalt-precorrin-5B C(1)-methyltransferase.